The chain runs to 597 residues: Centrosomal protein of 70 kDa (597 aa).

A disordered region spans residues 1–23; the sequence is MFPVAPKPQDSSQASDRLMTEKQ. Coiled-coil stretches lie at residues 66–179 and 254–326; these read MRQN…QMEV and TYKG…KKAE. A TPR repeat occupies 483–516; sequence NGVYPRMNEVYTRLGEMNNAVRNLQELLELDSSS.

Directly interacts with tubulin-gamma; this interaction determines centrosomal localization.

It is found in the cytoplasm. It localises to the cytoskeleton. The protein localises to the microtubule organizing center. The protein resides in the centrosome. Its function is as follows. Plays a role in the organization of both preexisting and nascent microtubules in interphase cells. During mitosis, required for the organization and orientation of the mitotic spindle. The polypeptide is Centrosomal protein of 70 kDa (CEP70) (Pongo abelii (Sumatran orangutan)).